Consider the following 622-residue polypeptide: Kelch-like protein 14 (622 aa).

One can recognise a BTB domain in the interval Cys33–Leu145. Residues Ala73–Lys108 form a disordered region. The segment covering Pro87 to Glu96 has biased composition (pro residues). Kelch repeat units lie at residues Met317–Asn366, Phe367–Lys418, Asn419–Gly465, Ile467–Asp512, Leu514–Asp564, and Ile566–Leu614.

The protein localises to the cytoplasm. It is found in the cytosol. It localises to the endoplasmic reticulum membrane. The polypeptide is Kelch-like protein 14 (KLHL14) (Gallus gallus (Chicken)).